The sequence spans 131 residues: Arsenate reductase 1 (131 aa).

Active-site nucleophile residues include cysteine 10, cysteine 82, and cysteine 89. 2 disulfides stabilise this stretch: cysteine 10/cysteine 82 and cysteine 82/cysteine 89.

The protein belongs to the low molecular weight phosphotyrosine protein phosphatase family. Thioredoxin-coupled ArsC subfamily.

It is found in the cytoplasm. It catalyses the reaction arsenate + [thioredoxin]-dithiol + H(+) = arsenite + [thioredoxin]-disulfide + H2O. Its function is as follows. Catalyzes the reduction of arsenate [As(V)] to arsenite [As(III)]. In Staphylococcus saprophyticus subsp. saprophyticus (strain ATCC 15305 / DSM 20229 / NCIMB 8711 / NCTC 7292 / S-41), this protein is Arsenate reductase 1.